A 193-amino-acid polypeptide reads, in one-letter code: p53 apoptosis effector related to PMP-22 (193 aa).

Transmembrane regions (helical) follow at residues arginine 12–glycine 32, leucine 81–glycine 101, valine 110–proline 130, and tryptophan 151–cysteine 171.

Belongs to the TMEM47 family. As to expression, expressed in the stratified squamous skin epithelium of the skin and the tongue, but not in simple epithelia (at protein level). Expressed in the oral epithelium, tongue epithelium and skin (at protein level). More abundant in areas of lower flow stress in the inner curvature compared to the outer curvature regions of the aorta (at protein level). Expressed in luminal cells and myoepithelium cells of the mammary epithelium (at protein level). Expression increases during the early stages of pregnancy before decreasing before birth, expression continues to be weak during involution which mirrors decreased desmosome abundance and organization at these time points (at protein level). Expressed by epithelial cells at the mucosal surface in the proximal colon (at protein level). Expressed in apoptotic cells.

It localises to the cell junction. Its subcellular location is the desmosome. It is found in the cell membrane. The protein resides in the cytoplasm. Functionally, component of intercellular desmosome junctions. Plays a role in stratified epithelial integrity and cell-cell adhesion by promoting desmosome assembly. Thereby plays a role in barrier function of the skin against infection. Plays a role in mammary epithelial tissue homeostasis and remodeling during and after pregnancy, potentially via its involvement in desmosome cell-cell junctions. Required for tooth enamel development via facilitating desmosome-mediated ameloblast adhesion to the stratum intermedium during the transitional stage of amelogenesis. May also play a role in downstream transcriptional regulation of other genes involved in amelogenesis such as AMBN, ENAM, MMP20 and KLK4. Plays a role as an effector in the TP53-dependent apoptotic pathway. Positively regulates apoptosis in T-helper 17 (Th17) cell populations via caspase-dependent signaling. Promotes neutrophil transepithelial migration in response to chemoattractants such as hepoxilin A3 (HXA3), N-Formylmethionyl-leucyl-phenylalanine (fMLP) and CXCL8/IL-8. May act as a positive regulator of endothelial cell apoptosis in response to blood flow-derived shear stress. This is p53 apoptosis effector related to PMP-22 from Mus musculus (Mouse).